A 586-amino-acid chain; its full sequence is Major facilitator superfamily domain-containing protein 6-like (586 aa).

The next 2 helical transmembrane spans lie at 50 to 70 (ILMGTKHLIATCWIPFCAFLA) and 78 to 98 (MFLTGSLLSSAGASLLMVLVP). The disordered stretch occupies residues 218 to 237 (GPVNLSKPQGDTQTPDHSSK). A compositionally biased stretch (polar residues) spans 223 to 237 (SKPQGDTQTPDHSSK). A run of 9 helical transmembrane segments spans residues 240 to 260 (PWTFILSLGVVVFWELLAAPL), 284 to 304 (LWVWKLLGVSAGVCGIAALVG), 318 to 338 (VIYFYSYSLVSTLALAVSTAF), 365 to 385 (LILLAFTVFWIGATASTVQDF), 397 to 417 (ELVMGFSVALSLLGEILFHPF), 428 to 448 (VGVLGLGLGCLALQVLYYAFI), 454 to 474 (VLPVQILSTISSGALWWAVGA), 494 to 514 (GHFYGSGCSLGSFVGGFVVLH), and 519 to 538 (VLYEACCVVLLLWLALFLSI).

It belongs to the major facilitator superfamily. MFSD6 family.

The protein resides in the membrane. This Mus musculus (Mouse) protein is Major facilitator superfamily domain-containing protein 6-like (Mfsd6l).